A 91-amino-acid polypeptide reads, in one-letter code: Small ribosomal subunit protein uS15 (91 aa).

It belongs to the universal ribosomal protein uS15 family. Part of the 30S ribosomal subunit. Forms a bridge to the 50S subunit in the 70S ribosome, contacting the 23S rRNA.

In terms of biological role, one of the primary rRNA binding proteins, it binds directly to 16S rRNA where it helps nucleate assembly of the platform of the 30S subunit by binding and bridging several RNA helices of the 16S rRNA. Functionally, forms an intersubunit bridge (bridge B4) with the 23S rRNA of the 50S subunit in the ribosome. The polypeptide is Small ribosomal subunit protein uS15 (Legionella pneumophila (strain Paris)).